The chain runs to 376 residues: Flap endonuclease 1 (376 aa).

Residues 1–105 (MGIKGLSKLL…GELNKRKENA (105 aa)) form an N-domain region. D34 contacts Mg(2+). DNA is bound by residues R47 and R71. Mg(2+) contacts are provided by D87, E159, E161, D180, and D182. An I-domain region spans residues 123–254 (QAKKLMKRTA…ITAFELIQQY (132 aa)). DNA is bound at residue E159. 2 residues coordinate DNA: G232 and D234. D234 provides a ligand contact to Mg(2+). The interval 336–344 (AQGRLDSFF) is interaction with PCNA. The interval 352–376 (SKSEAASGVKRKKPTTKAKESRKKK) is disordered. Over residues 360–376 (VKRKKPTTKAKESRKKK) the composition is skewed to basic residues.

This sequence belongs to the XPG/RAD2 endonuclease family. FEN1 subfamily. Interacts with PCNA. Three molecules of FEN1 bind to one PCNA trimer with each molecule binding to one PCNA monomer. PCNA stimulates the nuclease activity without altering cleavage specificity. The cofactor is Mg(2+). Post-translationally, phosphorylated. Phosphorylation upon DNA damage induces relocalization to the nuclear plasma.

The protein localises to the nucleus. It localises to the nucleolus. Its subcellular location is the nucleoplasm. The protein resides in the mitochondrion. In terms of biological role, structure-specific nuclease with 5'-flap endonuclease and 5'-3' exonuclease activities involved in DNA replication and repair. During DNA replication, cleaves the 5'-overhanging flap structure that is generated by displacement synthesis when DNA polymerase encounters the 5'-end of a downstream Okazaki fragment. It enters the flap from the 5'-end and then tracks to cleave the flap base, leaving a nick for ligation. Also involved in the long patch base excision repair (LP-BER) pathway, by cleaving within the apurinic/apyrimidinic (AP) site-terminated flap. Acts as a genome stabilization factor that prevents flaps from equilibrating into structures that lead to duplications and deletions. Also possesses 5'-3' exonuclease activity on nicked or gapped double-stranded DNA, and exhibits RNase H activity. Also involved in replication and repair of rDNA and in repairing mitochondrial DNA. The sequence is that of Flap endonuclease 1 from Entamoeba dispar (strain ATCC PRA-260 / SAW760).